We begin with the raw amino-acid sequence, 244 residues long: Phosphoribosyl isomerase A (244 aa).

D10 functions as the Proton acceptor in the catalytic mechanism. The Proton donor role is filled by D129.

It belongs to the HisA/HisF family.

The protein resides in the cytoplasm. The enzyme catalyses 1-(5-phospho-beta-D-ribosyl)-5-[(5-phospho-beta-D-ribosylamino)methylideneamino]imidazole-4-carboxamide = 5-[(5-phospho-1-deoxy-D-ribulos-1-ylimino)methylamino]-1-(5-phospho-beta-D-ribosyl)imidazole-4-carboxamide. It carries out the reaction N-(5-phospho-beta-D-ribosyl)anthranilate = 1-(2-carboxyphenylamino)-1-deoxy-D-ribulose 5-phosphate. Its pathway is amino-acid biosynthesis; L-histidine biosynthesis; L-histidine from 5-phospho-alpha-D-ribose 1-diphosphate: step 4/9. The protein operates within amino-acid biosynthesis; L-tryptophan biosynthesis; L-tryptophan from chorismate: step 3/5. In terms of biological role, involved in both the histidine and tryptophan biosynthetic pathways. The protein is Phosphoribosyl isomerase A of Mycobacterium ulcerans (strain Agy99).